We begin with the raw amino-acid sequence, 447 residues long: Protein king tubby (447 aa).

Composition is skewed to low complexity over residues 71-92 (GTGP…YSDS) and 157-169 (NNNN…NSSS). Residues 71 to 196 (GTGPNVTATS…GGAPDTEGDV (126 aa)) are disordered.

The protein belongs to the TUB family.

The protein resides in the cytoplasm. It localises to the nucleus. In Anopheles gambiae (African malaria mosquito), this protein is Protein king tubby.